Consider the following 420-residue polypeptide: UDP-N-acetylglucosamine 1-carboxyvinyltransferase (420 aa).

Residue Lys-22 to Asn-23 coordinates phosphoenolpyruvate. Residue Arg-93 participates in UDP-N-acetyl-alpha-D-glucosamine binding. Cys-117 serves as the catalytic Proton donor. A 2-(S-cysteinyl)pyruvic acid O-phosphothioketal modification is found at Cys-117. UDP-N-acetyl-alpha-D-glucosamine contacts are provided by Asp-307 and Ile-329.

This sequence belongs to the EPSP synthase family. MurA subfamily.

The protein resides in the cytoplasm. The enzyme catalyses phosphoenolpyruvate + UDP-N-acetyl-alpha-D-glucosamine = UDP-N-acetyl-3-O-(1-carboxyvinyl)-alpha-D-glucosamine + phosphate. Its pathway is cell wall biogenesis; peptidoglycan biosynthesis. Cell wall formation. Adds enolpyruvyl to UDP-N-acetylglucosamine. This Alteromonas mediterranea (strain DSM 17117 / CIP 110805 / LMG 28347 / Deep ecotype) protein is UDP-N-acetylglucosamine 1-carboxyvinyltransferase.